The primary structure comprises 396 residues: Purine ribonucleoside efflux pump NepI (396 aa).

At 1–21 the chain is on the cytoplasmic side; it reads MSEFIAENRGADAITRPNWSA. A helical transmembrane segment spans residues 22–42; sequence VFSVAFCVACLIIVEFLPVSL. Topologically, residues 43–54 are periplasmic; that stretch reads LTPMAQDLGISE. The chain crosses the membrane as a helical span at residues 55–75; the sequence is GVAGQSVTVTAFVAMFASLFI. Residues 76-85 are Cytoplasmic-facing; the sequence is TQTIQATDRR. Residues 86–106 traverse the membrane as a helical segment; that stretch reads NVVILFAVLLTLSCLLVSFAN. Position 107 (serine 107) is a topological domain, periplasmic. The chain crosses the membrane as a helical span at residues 108-128; that stretch reads FSLLLIGRACLGLALGGFWAM. Residues 129–147 lie on the Cytoplasmic side of the membrane; that stretch reads SASLTMRLVPPRTVPKALS. Residues 148-168 traverse the membrane as a helical segment; the sequence is VIFGAVSIALVIAAPLGSFLG. Residues 169-175 lie on the Periplasmic side of the membrane; that stretch reads ELIGWRN. The chain crosses the membrane as a helical span at residues 176–196; the sequence is VFNAAAVMGVLCIFWIIKSLP. Topologically, residues 197–215 are cytoplasmic; it reads SLPGEPSHQKQNTFRLLQR. The chain crosses the membrane as a helical span at residues 216–236; the sequence is PGVMAGMIAIFMSFAGQFAFF. Topologically, residues 237 to 255 are periplasmic; the sequence is TYIRPVYMNLAGFSVDGLT. A helical membrane pass occupies residues 256-276; sequence LVLLSFGIASFIGTSLSSFIL. Residues 277 to 281 are Cytoplasmic-facing; the sequence is KRSVK. The helical transmembrane segment at 282 to 302 threads the bilayer; sequence LALAGAPLILAVSALVLTLWG. The Periplasmic segment spans residues 303–305; sequence SDK. Residues 306 to 326 form a helical membrane-spanning segment; sequence IVATGVAIIWGLTFALVPVGW. At 327–343 the chain is on the cytoplasmic side; it reads STWITRSLADQAEKAGS. A helical transmembrane segment spans residues 344-364; the sequence is IQVAVIQLANTCGAAIGGYAL. Residues 365–366 lie on the Periplasmic side of the membrane; the sequence is DN. A helical membrane pass occupies residues 367-387; it reads IGLTSPLMFSGTLMLLTALLV. Residues 388–396 are Cytoplasmic-facing; sequence TAKVKMKKS.

This sequence belongs to the major facilitator superfamily. DHA1 family. NepI (TC 2.A.1.2.26) subfamily.

It is found in the cell inner membrane. It catalyses the reaction inosine(in) + H(+)(out) = inosine(out) + H(+)(in). The catalysed reaction is guanosine(in) + H(+)(out) = guanosine(out) + H(+)(in). Involved in the efflux of purine ribonucleosides, such as inosine and guanosine. The sequence is that of Purine ribonucleoside efflux pump NepI from Shigella sonnei (strain Ss046).